The following is a 55-amino-acid chain: Conotoxin Cal22d (55 aa).

Residues 1–5 constitute a propeptide that is removed on maturation; it reads GRPSA.

In terms of processing, contains 4 disulfide bonds. Expressed by the venom duct.

It localises to the secreted. Probable neurotoxin with unknown target. Possibly targets ion channels. The protein is Conotoxin Cal22d of Californiconus californicus (California cone).